Here is a 72-residue protein sequence, read N- to C-terminus: Light-harvesting polypeptide B-885 alpha-1 chain (72 aa).

Residues 1–16 are Cytoplasmic-facing; that stretch reads SAPAQWKLWLVMDPRT. Residues 17-37 traverse the membrane as a helical segment; it reads VMIGTAAWLGVLALLIHFLLL. Histidine 33 provides a ligand contact to a bacteriochlorophyll. Residues 38–72 lie on the Periplasmic side of the membrane; it reads GTERFNWIDTGLKEQKATAAAQAAITPAPVTAAAK.

Belongs to the antenna complex alpha subunit family. The core complex is formed by different alpha and beta chains, binding bacteriochlorophyll molecules, and arranged most probably in tetrameric structures disposed around the reaction center. The non-pigmented gamma chains may constitute additional components.

It localises to the cell inner membrane. Antenna complexes are light-harvesting systems, which transfer the excitation energy to the reaction centers. This Rhodocyclus tenuis (Rhodospirillum tenue) protein is Light-harvesting polypeptide B-885 alpha-1 chain.